The chain runs to 1323 residues: DNA-directed RNA polymerase subunit beta' (1323 aa).

Zn(2+) contacts are provided by Cys-60, Cys-62, Cys-75, and Cys-78. 3 residues coordinate Mg(2+): Asp-535, Asp-537, and Asp-539. 4 residues coordinate Zn(2+): Cys-894, Cys-977, Cys-984, and Cys-987.

It belongs to the RNA polymerase beta' chain family. In terms of assembly, the RNAP catalytic core consists of 2 alpha, 1 beta, 1 beta' and 1 omega subunit. When a sigma factor is associated with the core the holoenzyme is formed, which can initiate transcription. Mg(2+) serves as cofactor. Zn(2+) is required as a cofactor.

The enzyme catalyses RNA(n) + a ribonucleoside 5'-triphosphate = RNA(n+1) + diphosphate. Its function is as follows. DNA-dependent RNA polymerase catalyzes the transcription of DNA into RNA using the four ribonucleoside triphosphates as substrates. This chain is DNA-directed RNA polymerase subunit beta', found in Corynebacterium urealyticum (strain ATCC 43042 / DSM 7109).